Consider the following 259-residue polypeptide: Phosphatidylinositol transfer protein 2 (259 aa).

Residues 231–259 are a coiled coil; it reads LTIEDIRKIEEETKAELAKKLEENKAANK.

It belongs to the PtdIns transfer protein family. PI transfer class IIA subfamily.

It localises to the cytoplasm. The protein resides in the golgi apparatus. Catalyzes the transfer of PtdIns and phosphatidylcholine between membranes. This chain is Phosphatidylinositol transfer protein 2 (pitB), found in Dictyostelium discoideum (Social amoeba).